A 508-amino-acid polypeptide reads, in one-letter code: MGLPWYRVHTVVLNDPGRLLSVHIMHTALVAGWAGSMALYELAVFDPSDPVLDPMWRQGMFVIPFMTRLGITNSWGGWSITGGTITNPGIWSYEGVAGAHIVFSGLCFLAAIWHWVYWDLEIFCDERTGKPSLDLPKIFGIHLFLSGVACFGFGAFHVTGLYGPGIWVSDPYGLTGKVQPVNPAWGVEGFDPFVPGGIASHHIAAGTLGILAGLFHLSVRPPQRLYKGLRMGNIETVLSSSIAAVFFAAFVVAGTMWYGSATTPIELFGPTRYQWDQGYFQQEIYRRVGAGLAKNQSLSEAWSKIPEKLAFYDYIGNNPAKGGLFRAGSMDNGDGIAVGWLGHPIFRDKEGRELFVRRMPTFFETFPVVLVDGDGIVRADVPFRRAESKYSVEQVGVTVEFYGGELNGVSYSDPATVKKYARRAQLGEIFELDRATLKSDGVFRSSPRGWFTFGHASFALLFFFGHIWHGARTLFRDVFAGIDPDLDAQVEFGAFQKLGDPTTRRQVV.

A run of 6 helical transmembrane segments spans residues 21 to 36 (SVHIMHTALVAGWAGS), 101 to 115 (IVFSGLCFLAAIWHW), 140 to 156 (GIHLFLSGVACFGFGAF), 203 to 218 (IAAGTLGILAGLFHLS), 237 to 252 (VLSSSIAAVFFAAFVV), and 457 to 472 (SFALLFFFGHIWHGAR).

The protein belongs to the PsbB/PsbC family. PsbB subfamily. As to quaternary structure, PSII is composed of 1 copy each of membrane proteins PsbA, PsbB, PsbC, PsbD, PsbE, PsbF, PsbH, PsbI, PsbJ, PsbK, PsbL, PsbM, PsbT, PsbX, PsbY, PsbZ, Psb30/Ycf12, at least 3 peripheral proteins of the oxygen-evolving complex and a large number of cofactors. It forms dimeric complexes. It depends on Binds multiple chlorophylls. PSII binds additional chlorophylls, carotenoids and specific lipids. as a cofactor.

The protein localises to the plastid. Its subcellular location is the chloroplast thylakoid membrane. One of the components of the core complex of photosystem II (PSII). It binds chlorophyll and helps catalyze the primary light-induced photochemical processes of PSII. PSII is a light-driven water:plastoquinone oxidoreductase, using light energy to abstract electrons from H(2)O, generating O(2) and a proton gradient subsequently used for ATP formation. In Eucalyptus globulus subsp. globulus (Tasmanian blue gum), this protein is Photosystem II CP47 reaction center protein.